The sequence spans 301 residues: Probable alpha-L-glutamate ligase 1 (301 aa).

The ATP-grasp domain maps to 104–287 (LQLLSRKGIG…VTEPIVEYIE (184 aa)). Residues lysine 141, 178–179 (EY), aspartate 187, and 211–213 (RSN) contribute to the ATP site. Residues aspartate 248, glutamate 260, and asparagine 262 each contribute to the Mg(2+) site. The Mn(2+) site is built by aspartate 248, glutamate 260, and asparagine 262.

The protein belongs to the RimK family. The cofactor is Mg(2+). Mn(2+) is required as a cofactor.

This is Probable alpha-L-glutamate ligase 1 from Shewanella sp. (strain ANA-3).